Consider the following 229-residue polypeptide: Ras-related protein Rab-33B (229 aa).

GTP is bound by residues N43, V44, G45, K46, T47, C48, T62, and T65. T47 is a Mg(2+) binding site. The short motif at 56 to 68 (GRFPDRTEATIGV) is the Switch 1 element. T65 and D88 together coordinate Mg(2+). Positions 89 to 108 (TAGQERFRKSMVQHYYRNVH) match the Switch 2 motif. GTP is bound by residues G91, N148, K149, D151, A179, and K180. S-geranylgeranyl cysteine attachment occurs at residues C227 and C229. The residue at position 229 (C229) is a Cysteine methyl ester.

Belongs to the small GTPase superfamily. Rab family. As to quaternary structure, interacts (GTP- and GDP-bound forms) with ATG16L1; the complex consists of a tetramer where two RAB33B molecules bind independently one molecule of the ATG16L1 homodimer; the interaction promotes ATG12-ATG5-ATG16L1 complex recruitment to phagophores. Interacts with ATG16L2; however interaction is approximately hundred times lower than for ATG16L1. Interacts with RIC1 (via C-terminus domain); the interaction is direct with a preference for RAB33B-GTP. Interacts with RGP1. It depends on Mg(2+) as a cofactor. In terms of processing, prenylated. In terms of tissue distribution, ubiquitous.

It is found in the golgi apparatus membrane. It localises to the golgi apparatus. Its subcellular location is the cis-Golgi network. The protein localises to the preautophagosomal structure membrane. It carries out the reaction GTP + H2O = GDP + phosphate + H(+). With respect to regulation, regulated by guanine nucleotide exchange factors (GEFs) which promote the exchange of bound GDP for free GTP. Regulated by GTPase activating proteins (GAPs) such as SGSM2 which increase the GTP hydrolysis activity. Inhibited by GDP dissociation inhibitors (GDIs). The small GTPases Rab are key regulators of intracellular membrane trafficking, from the formation of transport vesicles to their fusion with membranes. Rabs cycle between an inactive GDP-bound form and an active GTP-bound form that is able to recruit to membranes different sets of downstream effectors directly responsible for vesicle formation, movement, tethering and fusion. RAB33B acts, in coordination with RAB6A, to regulate intra-Golgi retrograde trafficking. Participates in autophagosome formation by recruiting the ATG12-ATG5-ATG16L1 complex to phagophores, probably in a nucleotide-independent manner. This Mus musculus (Mouse) protein is Ras-related protein Rab-33B.